Here is a 571-residue protein sequence, read N- to C-terminus: Ferroportin (571 aa).

Residues 1-23 (MTRAGDHNRQRGCCGSLADYLTS) are Cytoplasmic-facing. The helical transmembrane segment at 24-53 (AKFLLYLGHSLSTWGDRMWHFAVSVFLVEL) threads the bilayer. Fe cation-binding residues include Asp-39 and His-43. Topologically, residues 54–57 (YGNS) are extracellular. A helical transmembrane segment spans residues 58-84 (LLLTAVYGLVVAGSVLVLGAIIGDWVD). Topologically, residues 85–87 (KNA) are cytoplasmic. The helical transmembrane segment at 88-118 (RLKVAQTSLVVQNVSVILCGIILMMVFLHKH) threads the bilayer. Residues 119–126 (ELLTMYHG) lie on the Extracellular side of the membrane. The helical transmembrane segment at 127–162 (WVLTSCYILIITIANIANLASTATAITIQRDWIVVV) threads the bilayer. Topologically, residues 163–164 (AG) are cytoplasmic. Residues 165–195 (EDRSKLANMNATIRRIDQLTNILAPMAVGQI) traverse the membrane as a helical segment. Topologically, residues 196–202 (MTFGSPV) are extracellular. Residues 203–229 (IGCGFISGWNLVSMCVEYVLLWKVYQK) form a helical membrane-spanning segment. Residues 230-306 (TPALAVKAGL…DGWVSYYNQP (77 aa)) are Cytoplasmic-facing. A helical transmembrane segment spans residues 307–333 (VFLAGMGLAFLYMTVLGFDCITTGYAY). A Fe cation-binding site is contributed by Cys-326. The Extracellular portion of the chain corresponds to 334–338 (TQGLS). The helical transmembrane segment at 339–366 (GSILSILMGASAITGIMGTVAFTWLRRK) threads the bilayer. The Cytoplasmic segment spans residues 367 to 368 (CG). A helical membrane pass occupies residues 369–391 (LVRTGLISGLAQLSCLILCVISV). Residues 392–453 (FMPGSPLDLS…ETSPESVPII (62 aa)) lie on the Extracellular side of the membrane. Residue Asn-434 is glycosylated (N-linked (GlcNAc...) asparagine). The helical transmembrane segment at 454 to 483 (SVSLLFAGVIAARIGLWSFDLTVTQLLQEN) threads the bilayer. At 484–488 (VIESE) the chain is on the cytoplasmic side. The helical transmembrane segment at 489 to 513 (RGIINGVQNSMNYLLDLLHFIMVIL) threads the bilayer. His-507 is a Fe cation binding site. Over 514–516 (APN) the chain is Extracellular. The helical transmembrane segment at 517–542 (PEAFGLLVLISVSFVAMGHIMYFRFA) threads the bilayer. Topologically, residues 543–571 (QNTLGNKLFACGPDAKEVRKENQANTSVV) are cytoplasmic.

This sequence belongs to the ferroportin (FP) (TC 2.A.100) family. SLC40A subfamily. Identified in a complex with STOM. Interacts with HAMP; affinity of the peptide hormone HAMP for SLC40A1 increases by 80-fold in the presence of iron and the interaction promotes SLC40A1 ubiquitination and degradation. Part of a complex composed of SLC40A1/ferroportin, TF/transferrin and HEPH/hephaestin that transfers iron from cells to transferrin. In terms of processing, polyubiquitinated by RNF217; leading to proteasomal degradation. Under conditions of high systemic iron levels, both the hormone peptide hepcidin/HAMP and holo(iron bound)-transferrin/TF induce the ubiquitination, internalization and proteasomal degradation of SLC40A1 to control iron release from cells. Detected in erythrocytes (at protein level). Expressed in placenta, intestine, muscle and spleen. Highly expressed in mature red blood.

The protein resides in the cell membrane. The protein localises to the basolateral cell membrane. The enzyme catalyses Fe(2+)(in) = Fe(2+)(out). Functionally, transports Fe(2+) from the inside of a cell to the outside of the cell, playing a key role for maintaining systemic iron homeostasis. Transports iron from intestinal, splenic, hepatic cells, macrophages and erythrocytes into the blood to provide iron to other tissues. Controls therefore dietary iron uptake, iron recycling by macrophages and erythrocytes, and release of iron stores in hepatocytes. When iron is in excess in serum, circulating HAMP/hepcidin levels increase resulting in a degradation of SLC40A1, thus limiting the iron efflux to plasma. The sequence is that of Ferroportin from Homo sapiens (Human).